Consider the following 129-residue polypeptide: Virion-associated protein (129 aa).

Coiled-coil stretches lie at residues 1 to 31 (MANL…ILEM) and 38 to 59 (IKES…LIND). The tract at residues 122–129 (PAGWPNQF) is capsid binding.

It belongs to the caulimovirus ORF III family. As to quaternary structure, homotetramer, through coiled-coil domain. Homotrimer when interacts with icosehadral capsid. Interacts with capsid protein, and with Movement protein.

The protein resides in the virion. Its subcellular location is the host cell junction. The protein localises to the host plasmodesma. Plays a role in virus cell-to-cell and plant-to-plant transmission. Interacts with virion icosahedral capsid and movement protein, thereby facilitating virion cell-to-cell transmission through plasmodesmata opened by viral movement protein. Also interacts with aphid transmission factor, attaching the virion to aphid stylet when the animal feeds on an virus infected plant. Aphid saliva may later detach the virion, inducing release of infectious particles when the animal feeds on a new plant. The chain is Virion-associated protein from Arabidopsis thaliana (Mouse-ear cress).